The following is a 152-amino-acid chain: D-aminoacyl-tRNA deacylase (152 aa).

Positions 138-139 (GP) match the Gly-cisPro motif, important for rejection of L-amino acids motif.

It belongs to the DTD family. As to quaternary structure, homodimer.

It is found in the cytoplasm. It catalyses the reaction glycyl-tRNA(Ala) + H2O = tRNA(Ala) + glycine + H(+). The enzyme catalyses a D-aminoacyl-tRNA + H2O = a tRNA + a D-alpha-amino acid + H(+). Functionally, an aminoacyl-tRNA editing enzyme that deacylates mischarged D-aminoacyl-tRNAs. Also deacylates mischarged glycyl-tRNA(Ala), protecting cells against glycine mischarging by AlaRS. Acts via tRNA-based rather than protein-based catalysis; rejects L-amino acids rather than detecting D-amino acids in the active site. By recycling D-aminoacyl-tRNA to D-amino acids and free tRNA molecules, this enzyme counteracts the toxicity associated with the formation of D-aminoacyl-tRNA entities in vivo and helps enforce protein L-homochirality. The sequence is that of D-aminoacyl-tRNA deacylase from Chloroherpeton thalassium (strain ATCC 35110 / GB-78).